The primary structure comprises 742 residues: Envelope glycoprotein H (742 aa).

Residues 1–23 (MRPGLPSYLIILAVCLFSHLLSS) form the signal peptide. Residues 24–719 (RYGAEAVSEP…VVDATDSRLL (696 aa)) lie on the Virion surface side of the membrane. N-linked (GlcNAc...) asparagine; by host glycosylation is found at Asn55, Asn62, Asn67, and Asn192. A disulfide bridge connects residues Cys195 and Cys211. The interaction with gL stretch occupies residues 217 to 280 (YLIDELRYVK…QTEKHELLVL (64 aa)). 3 disulfides stabilise this stretch: Cys330/Cys383, Cys495/Cys522, and Cys571/Cys624. Residues Asn641 and Asn700 are each glycosylated (N-linked (GlcNAc...) asparagine; by host). The chain crosses the membrane as a helical span at residues 720-740 (MMSVYALSAIIGIYLLYRMLK). Residues 741–742 (TC) lie on the Intravirion side of the membrane.

The protein belongs to the herpesviridae glycoprotein H family. Interacts with glycoprotein L (gL); this interaction is necessary for the correct processing and cell surface expression of gH. The heterodimer gH/gL seems to interact with gB trimers during fusion. Forms the envelope pentamer complex (PC) composed of gH, gL, UL128, UL130, and UL131A. The pentamer interacts with host NRP2. Forms the envelope trimer complex composed of gH, gL, and gO. The trimer interacts with host PDGFRA. The trimer also interacts with host EPHA2. The trimer also interacts with host TGFBR3. Interacts with UL116. In terms of processing, N-glycosylated, O-glycosylated, and sialylated.

The protein resides in the virion membrane. Its subcellular location is the host cell membrane. It localises to the host endosome membrane. In terms of biological role, the heterodimer glycoprotein H-glycoprotein L is required for the fusion of viral and plasma membranes leading to virus entry into the host cell. Following initial binding to host receptor, membrane fusion is mediated by the fusion machinery composed of gB and the heterodimer gH/gL. May also be involved in the fusion between the virion envelope and the outer nuclear membrane during virion morphogenesis. In human cytomegalovirus, forms two distincts complexes to mediate viral entry, a trimer and a pentamer at the surface of the virion envelope. The gH-gL-gO trimer is required for infection in fibroblasts by interacting with host PDGFRA, and in glioblastoma cells by interacting with host EPHA2. Thsi trimer may also be required in other cell types using host TGFBR3. The gH-gL-UL128-UL130-UL131A pentamer is essential for viral entry in epithelial, endothelial and myeloid cells via interaction with host NRP2. This Human cytomegalovirus (strain Merlin) (HHV-5) protein is Envelope glycoprotein H.